Reading from the N-terminus, the 291-residue chain is Ribonuclease Z (291 aa).

Zn(2+) contacts are provided by H61, H63, D65, H66, H133, D201, and H257. The Proton acceptor role is filled by D65.

It belongs to the RNase Z family. In terms of assembly, homodimer. Zn(2+) serves as cofactor.

The catalysed reaction is Endonucleolytic cleavage of RNA, removing extra 3' nucleotides from tRNA precursor, generating 3' termini of tRNAs. A 3'-hydroxy group is left at the tRNA terminus and a 5'-phosphoryl group is left at the trailer molecule.. In terms of biological role, zinc phosphodiesterase, which displays some tRNA 3'-processing endonuclease activity. Probably involved in tRNA maturation, by removing a 3'-trailer from precursor tRNA. This is Ribonuclease Z from Saccharolobus islandicus (strain Y.N.15.51 / Yellowstone #2) (Sulfolobus islandicus).